A 237-amino-acid chain; its full sequence is Endoglucanase-1 (237 aa).

Residues methionine 1–alanine 16 form the signal peptide. Glutamine 17 carries the post-translational modification Pyrrolidone carboxylic acid.

It belongs to the glycosyl hydrolase 12 (cellulase H) family.

The protein resides in the secreted. It carries out the reaction Endohydrolysis of (1-&gt;4)-beta-D-glucosidic linkages in cellulose, lichenin and cereal beta-D-glucans.. In Aspergillus aculeatus, this protein is Endoglucanase-1.